We begin with the raw amino-acid sequence, 360 residues long: Photosystem II protein D1 (360 aa).

A run of 3 helical transmembrane segments spans residues 29–46 (YIGWFGVVMIPTLLTATS), 118–133 (HFLLGVCCYIGREWEL), and 142–156 (WISVAFTAPVAAAAA). His-118 contributes to the chlorophyll a binding site. Tyr-126 contacts pheophytin a. Residues Asp-170 and Glu-189 each coordinate [CaMn4O5] cluster. A helical transmembrane segment spans residues 197-218 (FHQLGVAGVFGGSLFSAMHGSL). His-198 provides a ligand contact to chlorophyll a. Residues His-215 and 264-265 (SF) contribute to the a quinone site. His-215 provides a ligand contact to Fe cation. His-272 serves as a coordination point for Fe cation. The helical transmembrane segment at 274 to 288 (FLGAWPVVGIWLTSM) threads the bilayer. [CaMn4O5] cluster contacts are provided by His-332, Glu-333, Asp-342, and Ala-344. A propeptide spanning residues 345 to 360 (SGDSCPVALVAPSING) is cleaved from the precursor.

This sequence belongs to the reaction center PufL/M/PsbA/D family. As to quaternary structure, PSII is composed of 1 copy each of membrane proteins PsbA, PsbB, PsbC, PsbD, PsbE, PsbF, PsbH, PsbI, PsbJ, PsbK, PsbL, PsbM, PsbT, PsbX, PsbY, PsbZ, Psb30/Ycf12, at least 3 peripheral proteins of the oxygen-evolving complex and a large number of cofactors. It forms dimeric complexes. It depends on The D1/D2 heterodimer binds P680, chlorophylls that are the primary electron donor of PSII, and subsequent electron acceptors. It shares a non-heme iron and each subunit binds pheophytin, quinone, additional chlorophylls, carotenoids and lipids. D1 provides most of the ligands for the Mn4-Ca-O5 cluster of the oxygen-evolving complex (OEC). There is also a Cl(-1) ion associated with D1 and D2, which is required for oxygen evolution. The PSII complex binds additional chlorophylls, carotenoids and specific lipids. as a cofactor. In terms of processing, tyr-161 forms a radical intermediate that is referred to as redox-active TyrZ, YZ or Y-Z. C-terminally processed by CTPA; processing is essential to allow assembly of the oxygen-evolving complex and thus photosynthetic growth.

Its subcellular location is the plastid. The protein resides in the chloroplast thylakoid membrane. The catalysed reaction is 2 a plastoquinone + 4 hnu + 2 H2O = 2 a plastoquinol + O2. In terms of biological role, photosystem II (PSII) is a light-driven water:plastoquinone oxidoreductase that uses light energy to abstract electrons from H(2)O, generating O(2) and a proton gradient subsequently used for ATP formation. It consists of a core antenna complex that captures photons, and an electron transfer chain that converts photonic excitation into a charge separation. The D1/D2 (PsbA/PsbD) reaction center heterodimer binds P680, the primary electron donor of PSII as well as several subsequent electron acceptors. The sequence is that of Photosystem II protein D1 from Palmaria palmata (Dulse).